Consider the following 113-residue polypeptide: UPF0251 protein TK0562 (113 aa).

This sequence belongs to the UPF0251 family.

This Thermococcus kodakarensis (strain ATCC BAA-918 / JCM 12380 / KOD1) (Pyrococcus kodakaraensis (strain KOD1)) protein is UPF0251 protein TK0562.